A 254-amino-acid polypeptide reads, in one-letter code: 5-oxoprolinase subunit A (254 aa).

Belongs to the LamB/PxpA family. Forms a complex composed of PxpA, PxpB and PxpC.

It catalyses the reaction 5-oxo-L-proline + ATP + 2 H2O = L-glutamate + ADP + phosphate + H(+). Functionally, catalyzes the cleavage of 5-oxoproline to form L-glutamate coupled to the hydrolysis of ATP to ADP and inorganic phosphate. This is 5-oxoprolinase subunit A from Burkholderia lata (strain ATCC 17760 / DSM 23089 / LMG 22485 / NCIMB 9086 / R18194 / 383).